A 689-amino-acid chain; its full sequence is Glycine--tRNA ligase beta subunit (689 aa).

It belongs to the class-II aminoacyl-tRNA synthetase family. As to quaternary structure, tetramer of two alpha and two beta subunits.

It localises to the cytoplasm. The catalysed reaction is tRNA(Gly) + glycine + ATP = glycyl-tRNA(Gly) + AMP + diphosphate. The protein is Glycine--tRNA ligase beta subunit of Lacticaseibacillus paracasei (strain ATCC 334 / BCRC 17002 / CCUG 31169 / CIP 107868 / KCTC 3260 / NRRL B-441) (Lactobacillus paracasei).